The sequence spans 466 residues: Signal recognition particle 54 kDa protein (466 aa).

GTP-binding positions include 104-111 (GLQGSGKT), 184-188 (DTAGR), and 242-245 (TKLD). The interval 444 to 466 (MQQGGGGGGGGGGGLGGMGPFGD) is disordered. Over residues 446–466 (QGGGGGGGGGGGLGGMGPFGD) the composition is skewed to gly residues.

Belongs to the GTP-binding SRP family. SRP54 subfamily. As to quaternary structure, part of the signal recognition particle protein translocation system, which is composed of SRP and FtsY. Archaeal SRP consists of a 7S RNA molecule of 300 nucleotides and two protein subunits: SRP54 and SRP19.

The protein resides in the cytoplasm. It catalyses the reaction GTP + H2O = GDP + phosphate + H(+). Functionally, involved in targeting and insertion of nascent membrane proteins into the cytoplasmic membrane. Binds to the hydrophobic signal sequence of the ribosome-nascent chain (RNC) as it emerges from the ribosomes. The SRP-RNC complex is then targeted to the cytoplasmic membrane where it interacts with the SRP receptor FtsY. This Natronomonas pharaonis (strain ATCC 35678 / DSM 2160 / CIP 103997 / JCM 8858 / NBRC 14720 / NCIMB 2260 / Gabara) (Halobacterium pharaonis) protein is Signal recognition particle 54 kDa protein.